The chain runs to 280 residues: MAEPLAVDPTGLSAAAAKLAGLVFPQPPAPIAVSGTDSVVAAINETMPSIESLVSDGLPGVKAALTRTASNMNAAADVYAKTDQSLGTSLSQYAFGSSGEGLAGVASVGGQPSQATQLLSTPVSQVTTQLGETAAELAPRVVATVPQLVQLAPHAVQMSQNASPIAQTISQTAQQAAQSAQGGSGPMPAQLASAEKPATEQAEPVHEVTNDDQGDQGDVQPAEVVAAARDEGAGASPGQQPGGGVPAQAMDTGAGARPAASPLAAPVDPSTPAPSTTTTL.

Position 70 is a phosphoserine (Ser-70). Low complexity-rich tracts occupy residues 167–181 and 246–280; these read QTISQTAQQAAQSAQ and PAQAMDTGAGARPAASPLAAPVDPSTPAPSTTTTL. The segment at 167–280 is disordered; sequence QTISQTAQQA…TPAPSTTTTL (114 aa).

Residues 76-280 interact with EsxB and an artificial EsxB-EsxA heterodimer. In terms of processing, phosphorylated at Ser-70.

The protein resides in the secreted. In terms of biological role, could be involved in regulation of growth and intracellular survival. The sequence is that of ESX-1 secretion-associated protein EspJ from Mycobacterium tuberculosis (strain ATCC 25618 / H37Rv).